Reading from the N-terminus, the 65-residue chain is Putative antitoxin VapB7 (65 aa).

It belongs to the UPF0165 family.

In terms of biological role, possibly the antitoxin component of a type II toxin-antitoxin (TA) system. Its cognate toxin is VapC7 (Potential). This Archaeoglobus fulgidus (strain ATCC 49558 / DSM 4304 / JCM 9628 / NBRC 100126 / VC-16) protein is Putative antitoxin VapB7 (vapB7).